The chain runs to 151 residues: Ribosome maturation factor RimP (151 aa).

Belongs to the RimP family.

Its subcellular location is the cytoplasm. Its function is as follows. Required for maturation of 30S ribosomal subunits. This is Ribosome maturation factor RimP from Aliivibrio salmonicida (strain LFI1238) (Vibrio salmonicida (strain LFI1238)).